Reading from the N-terminus, the 28-residue chain is Somatostatin-2 (28 aa).

Residues cysteine 17 and cysteine 28 are joined by a disulfide bond.

It belongs to the somatostatin family.

The protein resides in the secreted. In terms of biological role, somatostatin inhibits the release of somatotropin. The protein is Somatostatin-2 (sst2) of Oreochromis niloticus (Nile tilapia).